The sequence spans 397 residues: Argininosuccinate synthase (397 aa).

9–17 (AYSGGLDTS) is an ATP binding site. Residue Y87 participates in L-citrulline binding. G117 provides a ligand contact to ATP. L-aspartate is bound by residues T119, N123, and D124. Position 123 (N123) interacts with L-citrulline. R127, S175, S184, E257, and Y269 together coordinate L-citrulline.

This sequence belongs to the argininosuccinate synthase family. Type 1 subfamily. In terms of assembly, homotetramer.

The protein resides in the cytoplasm. The catalysed reaction is L-citrulline + L-aspartate + ATP = 2-(N(omega)-L-arginino)succinate + AMP + diphosphate + H(+). The protein operates within amino-acid biosynthesis; L-arginine biosynthesis; L-arginine from L-ornithine and carbamoyl phosphate: step 2/3. This is Argininosuccinate synthase from Dictyoglomus turgidum (strain DSM 6724 / Z-1310).